We begin with the raw amino-acid sequence, 283 residues long: Acetylglutamate kinase (283 aa).

Substrate contacts are provided by residues 64-65 (GG), R86, and N181.

The protein belongs to the acetylglutamate kinase family. ArgB subfamily.

The protein localises to the cytoplasm. It catalyses the reaction N-acetyl-L-glutamate + ATP = N-acetyl-L-glutamyl 5-phosphate + ADP. The protein operates within amino-acid biosynthesis; L-arginine biosynthesis; N(2)-acetyl-L-ornithine from L-glutamate: step 2/4. Its function is as follows. Catalyzes the ATP-dependent phosphorylation of N-acetyl-L-glutamate. The polypeptide is Acetylglutamate kinase (Sulfurovum sp. (strain NBC37-1)).